We begin with the raw amino-acid sequence, 233 residues long: Octanoyltransferase (233 aa).

The BPL/LPL catalytic domain maps to 38-218 (AGGPDTLLLL…AVCDALDGVL (181 aa)). Residues 57 to 66 (RRTEPHERPL) are compositionally biased toward basic and acidic residues. The tract at residues 57–77 (RRTEPHERPLDGTPVVDTDRG) is disordered. Substrate is bound by residues 76 to 83 (RGGKITWH), 148 to 150 (AIG), and 161 to 163 (GFA). The active-site Acyl-thioester intermediate is Cys179.

The protein belongs to the LipB family.

It localises to the cytoplasm. It catalyses the reaction octanoyl-[ACP] + L-lysyl-[protein] = N(6)-octanoyl-L-lysyl-[protein] + holo-[ACP] + H(+). Its pathway is protein modification; protein lipoylation via endogenous pathway; protein N(6)-(lipoyl)lysine from octanoyl-[acyl-carrier-protein]: step 1/2. In terms of biological role, catalyzes the transfer of endogenously produced octanoic acid from octanoyl-acyl-carrier-protein onto the lipoyl domains of lipoate-dependent enzymes. Lipoyl-ACP can also act as a substrate although octanoyl-ACP is likely to be the physiological substrate. This is Octanoyltransferase from Mycolicibacterium paratuberculosis (strain ATCC BAA-968 / K-10) (Mycobacterium paratuberculosis).